We begin with the raw amino-acid sequence, 360 residues long: Phospho-N-acetylmuramoyl-pentapeptide-transferase (360 aa).

The next 10 membrane-spanning stretches (helical) occupy residues 21–41, 74–94, 97–117, 135–155, 168–188, 199–219, 236–256, 263–283, 288–308, and 338–358; these read YVTF…LWWG, MGGL…GDLG, YVWV…IDDY, LLQS…ADTA, VMPQ…VGSS, GLAI…AYLS, AGEL…FLWF, VFMG…IAVL, ILLV…ILQV, and VIVR…ATLK.

The protein belongs to the glycosyltransferase 4 family. MraY subfamily. The cofactor is Mg(2+).

The protein resides in the cell inner membrane. It carries out the reaction UDP-N-acetyl-alpha-D-muramoyl-L-alanyl-gamma-D-glutamyl-meso-2,6-diaminopimeloyl-D-alanyl-D-alanine + di-trans,octa-cis-undecaprenyl phosphate = di-trans,octa-cis-undecaprenyl diphospho-N-acetyl-alpha-D-muramoyl-L-alanyl-D-glutamyl-meso-2,6-diaminopimeloyl-D-alanyl-D-alanine + UMP. The protein operates within cell wall biogenesis; peptidoglycan biosynthesis. Its function is as follows. Catalyzes the initial step of the lipid cycle reactions in the biosynthesis of the cell wall peptidoglycan: transfers peptidoglycan precursor phospho-MurNAc-pentapeptide from UDP-MurNAc-pentapeptide onto the lipid carrier undecaprenyl phosphate, yielding undecaprenyl-pyrophosphoryl-MurNAc-pentapeptide, known as lipid I. The polypeptide is Phospho-N-acetylmuramoyl-pentapeptide-transferase (Shewanella piezotolerans (strain WP3 / JCM 13877)).